Reading from the N-terminus, the 633-residue chain is Histone-lysine N-methyltransferase Su(var)3-9 (633 aa).

The region spanning 213 to 271 (YIVEKIESVEVVQFQPVFFVKWLGYDVSANTWESYVNLSDCAEMEKFVERHLQLHQHYI) is the Chromo domain. Residues 407-472 (VGCMCRHQSG…SCTNRVVQNG (66 aa)) enclose the Pre-SET domain. 9 residues coordinate Zn(2+): cysteine 409, cysteine 411, cysteine 419, cysteine 425, cysteine 426, cysteine 454, cysteine 458, cysteine 460, and cysteine 464. One can recognise an SET domain in the interval 475 to 601 (HPLVLFKTSN…AGEELSFDYI (127 aa)). Residues 486-488 (SGW), tyrosine 529, and 558-559 (NH) contribute to the S-adenosyl-L-methionine site. Positions 561, 621, 623, and 628 each coordinate Zn(2+). The Post-SET domain maps to 617–633 (ARVQCRCGAANCRKVLF).

The protein belongs to the class V-like SAM-binding methyltransferase superfamily. Histone-lysine methyltransferase family. Suvar3-9 subfamily. As to quaternary structure, interacts with Su(var)205 and Su(var)3-7. Probably associates with HDAC1/Rpd3.

Its subcellular location is the nucleus. It localises to the chromosome. The protein resides in the centromere. It carries out the reaction L-lysyl(9)-[histone H3] + 3 S-adenosyl-L-methionine = N(6),N(6),N(6)-trimethyl-L-lysyl(9)-[histone H3] + 3 S-adenosyl-L-homocysteine + 3 H(+). In terms of biological role, histone methyltransferase that specifically trimethylates 'Lys-9' of histone H3 using monomethylated H3 'Lys-9' as substrate. H3 'Lys-9' trimethylation represents a specific tag for epigenetic transcriptional repression by recruiting Su(var)205/HP1 to methylated histones. Mainly functions in heterochromatin regions, thereby playing a central role in the establishment of constitutive heterochromatin at pericentric regions. Involved in heterochromatic gene silencing including the modification of position-effect-variegation. This Drosophila pseudoobscura pseudoobscura (Fruit fly) protein is Histone-lysine N-methyltransferase Su(var)3-9 (Su(var)3-9).